Here is a 114-residue protein sequence, read N- to C-terminus: uncharacterized protein (114 aa).

Residue cysteine 10 is part of the active site.

This sequence belongs to the ArsC family.

This is an uncharacterized protein from Haemophilus influenzae (strain ATCC 51907 / DSM 11121 / KW20 / Rd).